The primary structure comprises 277 residues: Large ribosomal subunit protein uL2 (277 aa).

The tract at residues 223–264 is disordered; it reads VAMNPVDHPHGGGEGKTAAGRHPVSPWGTPSKGSRTRRNKRT.

The protein belongs to the universal ribosomal protein uL2 family. Part of the 50S ribosomal subunit. Forms a bridge to the 30S subunit in the 70S ribosome.

Its function is as follows. One of the primary rRNA binding proteins. Required for association of the 30S and 50S subunits to form the 70S ribosome, for tRNA binding and peptide bond formation. It has been suggested to have peptidyltransferase activity; this is somewhat controversial. Makes several contacts with the 16S rRNA in the 70S ribosome. The protein is Large ribosomal subunit protein uL2 of Nitrosomonas eutropha (strain DSM 101675 / C91 / Nm57).